The following is a 120-amino-acid chain: Large ribosomal subunit protein bL19 (120 aa).

This sequence belongs to the bacterial ribosomal protein bL19 family.

This protein is located at the 30S-50S ribosomal subunit interface and may play a role in the structure and function of the aminoacyl-tRNA binding site. The chain is Large ribosomal subunit protein bL19 (rplS) from Nostoc sp. (strain PCC 7120 / SAG 25.82 / UTEX 2576).